Here is a 372-residue protein sequence, read N- to C-terminus: F-box/kelch-repeat protein At5g48990 (372 aa).

The 47-residue stretch at 14–60 (SSPNPSLPEDLIVSILARVSRSYYTNLSVVSKTFRSILTSPELYKTR) folds into the F-box domain. Residues 176-222 (RTYFPGSSEKPDSLNCVEVYNTNTQTWNPVPPQKRKLKFGNMEGKIY) form a Kelch repeat.

This is F-box/kelch-repeat protein At5g48990 from Arabidopsis thaliana (Mouse-ear cress).